Reading from the N-terminus, the 255-residue chain is tRNA (guanine-N(1)-)-methyltransferase (255 aa).

Residues Gly-113 and 133-138 contribute to the S-adenosyl-L-methionine site; that span reads IGDYVL.

Belongs to the RNA methyltransferase TrmD family. As to quaternary structure, homodimer.

It is found in the cytoplasm. The catalysed reaction is guanosine(37) in tRNA + S-adenosyl-L-methionine = N(1)-methylguanosine(37) in tRNA + S-adenosyl-L-homocysteine + H(+). Its function is as follows. Specifically methylates guanosine-37 in various tRNAs. The polypeptide is tRNA (guanine-N(1)-)-methyltransferase (Escherichia coli O127:H6 (strain E2348/69 / EPEC)).